A 336-amino-acid chain; its full sequence is Atypical chemokine receptor 1 (336 aa).

Residues 1–63 lie on the Extracellular side of the membrane; sequence MGNCLHPAEL…CNLLDDSALP (63 aa). 3 N-linked (GlcNAc...) asparagine glycosylation sites follow: Asn-16, Asn-27, and Asn-33. 2 disulfide bridges follow: Cys-51-Cys-276 and Cys-129-Cys-195. A helical transmembrane segment spans residues 64 to 84; sequence FFILVSVLGILASGIVLFMFF. At 85-95 the chain is on the cytoplasmic side; it reads RPLFHWQLCPG. Residues 96 to 116 form a helical membrane-spanning segment; the sequence is WPVLAQLAVGSALFSIVVPIL. At 117 to 129 the chain is on the extracellular side; the sequence is APGLGNTRSSALC. A helical transmembrane segment spans residues 130-153; the sequence is SLGYCVWYGSAFAQALLLGCHASL. The Cytoplasmic segment spans residues 154-166; that stretch reads GPKLGADQVPGLT. The helical transmembrane segment at 167-187 threads the bilayer; that stretch reads LGLSVGLWGVAALLTLPVTLA. The Extracellular segment spans residues 188-207; sequence SGASGGLCTPVYSMELKALQ. The helical transmembrane segment at 208–228 threads the bilayer; the sequence is ATHAVACLAIFVLLPLGLFGA. At 229-244 the chain is on the cytoplasmic side; it reads KGLKKALGMGPGPWMN. Residues 245–265 form a helical membrane-spanning segment; the sequence is ILWAWFIFWWPHGVVLGLDFL. The Extracellular segment spans residues 266–287; it reads VRSKLLLLSTCLAQQALDLLLN. Residues 288–308 form a helical membrane-spanning segment; the sequence is LAEALAILHCVATPLLLALFC. Topologically, residues 309–336 are cytoplasmic; it reads HQATRTLLPSLPLPEGWSSHLDTLGSKS.

Belongs to the G-protein coupled receptor 1 family. Atypical chemokine receptor subfamily.

The protein localises to the early endosome. It is found in the recycling endosome. Its subcellular location is the membrane. Atypical chemokine receptor that controls chemokine levels and localization via high-affinity chemokine binding that is uncoupled from classic ligand-driven signal transduction cascades, resulting instead in chemokine sequestration, degradation, or transcytosis. Also known as interceptor (internalizing receptor) or chemokine-scavenging receptor or chemokine decoy receptor. Has a promiscuous chemokine-binding profile, interacting with inflammatory chemokines of both the CXC and the CC subfamilies but not with homeostatic chemokines. Acts as a receptor for chemokines including CCL2, CCL5, CCL7, CCL11, CCL13, CCL14, CCL17, CXCL5, CXCL6, IL8/CXCL8, CXCL11, GRO, RANTES, MCP-1 and TARC. May regulate chemokine bioavailability and, consequently, leukocyte recruitment through two distinct mechanisms: when expressed in endothelial cells, it sustains the abluminal to luminal transcytosis of tissue-derived chemokines and their subsequent presentation to circulating leukocytes; when expressed in erythrocytes, serves as blood reservoir of cognate chemokines but also as a chemokine sink, buffering potential surges in plasma chemokine levels. The polypeptide is Atypical chemokine receptor 1 (ACKR1) (Papio hamadryas (Hamadryas baboon)).